Reading from the N-terminus, the 287-residue chain is MKNTSKFQNVVIVTIVGWLVLFVFLPNLMIIGTSFLTRDDASFVKMVFTLDNYARLLDPLYFEVLLHSLNMALIATLSCLVLGYPFAWFLAKLPEKIRPLLLFLLIVPFWTNSLIRIYGLKIFLSTKGYLNEFLLWLGVIDTPIRIMFTPSAVIIGLVYILLPFMVMPLYSSIEKLDKPLLEAARDLGASKMQTFIRIIIPLTMPGIVAGCLLVMLPAMGLFYVSDLMGGAKNLLIGNVIKVQFLNIRDWPFGAATSITLTIVMGLMLLIYWRASRLLNKKVSDISD.

Residues 1–10 (MKNTSKFQNV) lie on the Cytoplasmic side of the membrane. The chain crosses the membrane as a helical span at residues 11-31 (VIVTIVGWLVLFVFLPNLMII). Residues 32–70 (GTSFLTRDDASFVKMVFTLDNYARLLDPLYFEVLLHSLN) lie on the Periplasmic side of the membrane. The region spanning 65-271 (LLHSLNMALI…IVMGLMLLIY (207 aa)) is the ABC transmembrane type-1 domain. A helical membrane pass occupies residues 71–91 (MALIATLSCLVLGYPFAWFLA). The Cytoplasmic segment spans residues 92-99 (KLPEKIRP). The helical transmembrane segment at 100–120 (LLLFLLIVPFWTNSLIRIYGL) threads the bilayer. Residues 121–145 (KIFLSTKGYLNEFLLWLGVIDTPIR) are Periplasmic-facing. A helical transmembrane segment spans residues 146–166 (IMFTPSAVIIGLVYILLPFMV). At 167-197 (MPLYSSIEKLDKPLLEAARDLGASKMQTFIR) the chain is on the cytoplasmic side. The chain crosses the membrane as a helical span at residues 198–218 (IIIPLTMPGIVAGCLLVMLPA). Over 219–251 (MGLFYVSDLMGGAKNLLIGNVIKVQFLNIRDWP) the chain is Periplasmic. A helical transmembrane segment spans residues 252-272 (FGAATSITLTIVMGLMLLIYW). Topologically, residues 273-287 (RASRLLNKKVSDISD) are cytoplasmic.

This sequence belongs to the binding-protein-dependent transport system permease family. CysTW subfamily.

It is found in the cell inner membrane. Required for the activity of the bacterial periplasmic transport system of putrescine and spermidine. The sequence is that of Spermidine/putrescine transport system permease protein PotB (potB) from Salmonella typhi.